The sequence spans 394 residues: 1-deoxy-D-xylulose 5-phosphate reductoisomerase (394 aa).

7 residues coordinate NADPH: threonine 12, glycine 13, serine 14, isoleucine 15, glycine 38, asparagine 41, and asparagine 132. Lysine 133 contributes to the 1-deoxy-D-xylulose 5-phosphate binding site. Residue glutamate 134 participates in NADPH binding. Aspartate 156 serves as a coordination point for Mn(2+). Serine 157, glutamate 158, serine 182, and histidine 205 together coordinate 1-deoxy-D-xylulose 5-phosphate. A Mn(2+)-binding site is contributed by glutamate 158. Position 211 (glycine 211) interacts with NADPH. The 1-deoxy-D-xylulose 5-phosphate site is built by serine 218, asparagine 223, lysine 224, and glutamate 227. Glutamate 227 is a Mn(2+) binding site.

The protein belongs to the DXR family. The cofactor is Mg(2+). Mn(2+) is required as a cofactor.

It carries out the reaction 2-C-methyl-D-erythritol 4-phosphate + NADP(+) = 1-deoxy-D-xylulose 5-phosphate + NADPH + H(+). It functions in the pathway isoprenoid biosynthesis; isopentenyl diphosphate biosynthesis via DXP pathway; isopentenyl diphosphate from 1-deoxy-D-xylulose 5-phosphate: step 1/6. Its function is as follows. Catalyzes the NADPH-dependent rearrangement and reduction of 1-deoxy-D-xylulose-5-phosphate (DXP) to 2-C-methyl-D-erythritol 4-phosphate (MEP). The polypeptide is 1-deoxy-D-xylulose 5-phosphate reductoisomerase (Pseudarthrobacter chlorophenolicus (strain ATCC 700700 / DSM 12829 / CIP 107037 / JCM 12360 / KCTC 9906 / NCIMB 13794 / A6) (Arthrobacter chlorophenolicus)).